We begin with the raw amino-acid sequence, 234 residues long: Glucosamine-6-phosphate deaminase (234 aa).

The Proton acceptor; for enolization step role is filled by D62. The active-site For ring-opening step is N128. The active-site Proton acceptor; for ring-opening step is H130. E135 serves as the catalytic For ring-opening step.

Belongs to the glucosamine/galactosamine-6-phosphate isomerase family. NagB subfamily.

It carries out the reaction alpha-D-glucosamine 6-phosphate + H2O = beta-D-fructose 6-phosphate + NH4(+). It functions in the pathway amino-sugar metabolism; N-acetylneuraminate degradation; D-fructose 6-phosphate from N-acetylneuraminate: step 5/5. Its function is as follows. Catalyzes the reversible isomerization-deamination of glucosamine 6-phosphate (GlcN6P) to form fructose 6-phosphate (Fru6P) and ammonium ion. This Streptococcus pyogenes serotype M49 (strain NZ131) protein is Glucosamine-6-phosphate deaminase.